A 422-amino-acid polypeptide reads, in one-letter code: MHDLKSIRDNPDGFDAGLKRRGLEPKAAAILDLDTRRRAAQTAFQEMQARRNDASKQIGALKKSGGDASALMDEVASLKERMPAAEEEDKALGAEIESILASIPNLPASDVPDGPDEDHNVELRKWGTPKSFAFTALDHDAIGAKLGLMDFDGAAKLSGARFVVLKGQLARLQRAIGQFMLDLQTVEHGYTEMDPPLMVKDGAAFGTGQLPKFGEDLFKTNTGHWLIPTAEVPLTNLVSDEILDEKALPLRMTALTPCFRSEAGAAGKDTRGMIRQHQFHKVEMVSIAHPDASGAEHERMTQCAETVLQRLGLAYRVIVLCTGDMGFSAQKTYDIEVWLPGQQRYREISSCSNCGDFQARRMKARFRPEGEKGTRFVHTLNGSGLAVGRTLIAVMENYQREDGTIEVPEALRPYMGGLEVIG.

The tract at residues 1–20 is disordered; the sequence is MHDLKSIRDNPDGFDAGLKR. An L-serine-binding site is contributed by 229–231; the sequence is TAE. 260–262 is a binding site for ATP; that stretch reads RSE. Position 283 (glutamate 283) interacts with L-serine. 347-350 contacts ATP; sequence EISS. Serine 383 contacts L-serine.

Belongs to the class-II aminoacyl-tRNA synthetase family. Type-1 seryl-tRNA synthetase subfamily. In terms of assembly, homodimer. The tRNA molecule binds across the dimer.

The protein resides in the cytoplasm. The catalysed reaction is tRNA(Ser) + L-serine + ATP = L-seryl-tRNA(Ser) + AMP + diphosphate + H(+). It catalyses the reaction tRNA(Sec) + L-serine + ATP = L-seryl-tRNA(Sec) + AMP + diphosphate + H(+). It participates in aminoacyl-tRNA biosynthesis; selenocysteinyl-tRNA(Sec) biosynthesis; L-seryl-tRNA(Sec) from L-serine and tRNA(Sec): step 1/1. Functionally, catalyzes the attachment of serine to tRNA(Ser). Is also able to aminoacylate tRNA(Sec) with serine, to form the misacylated tRNA L-seryl-tRNA(Sec), which will be further converted into selenocysteinyl-tRNA(Sec). The sequence is that of Serine--tRNA ligase from Paramagnetospirillum magneticum (strain ATCC 700264 / AMB-1) (Magnetospirillum magneticum).